The chain runs to 363 residues: Protein-arginine kinase (363 aa).

One can recognise a Phosphagen kinase C-terminal domain in the interval 24 to 254 (IVLSSRIRLA…AQLIEQERSA (231 aa)). ATP is bound by residues 27–31 (SSRIR), His-92, Arg-125, 176–180 (RASVM), and 207–212 (RGIYGE). Residues 337-342 (RDARRA) carry the RDXXRA motif of the pArg binding pocket involved in allosteric regulation motif.

This sequence belongs to the ATP:guanido phosphotransferase family.

It carries out the reaction L-arginyl-[protein] + ATP = N(omega)-phospho-L-arginyl-[protein] + ADP + H(+). Appears to be allosterically activated by the binding of pArg-containing polypeptides to the pArg-binding pocket localized in the C-terminal domain of McsB. Its function is as follows. Catalyzes the specific phosphorylation of arginine residues in a large number of proteins. Is part of the bacterial stress response system. Protein arginine phosphorylation has a physiologically important role and is involved in the regulation of many critical cellular processes, such as protein homeostasis, motility, competence, and stringent and stress responses, by regulating gene expression and protein activity. The protein is Protein-arginine kinase of Bacillus velezensis (strain DSM 23117 / BGSC 10A6 / LMG 26770 / FZB42) (Bacillus amyloliquefaciens subsp. plantarum).